Reading from the N-terminus, the 639-residue chain is Exocyst complex component EXO70E2 (639 aa).

It belongs to the EXO70 family. Component of the exocyst complex and of the exocyst-positive organelle (EXPO). Interacts with SEC6, SEC10A and SEC10B. As to expression, expressed in roots, in the root-hair zone, both in root hair and nonhair cells.

The protein localises to the secreted. It localises to the extracellular exosome. It is found in the cell membrane. The protein resides in the cytoplasm. Its subcellular location is the endomembrane system. Influences the subcellular localization patterns of other exocyst complex proteins (e.g. SEC5A, SEC15A, SEC15B and EXO84B) leading to their recruitment to exocyst, well-defined large punctate structures throughout the cytosol. Essential component for the formation and the recruitment of exocyst subunits to the exocyst-positive organelle (EXPO), a secreted double membrane structure also called extracellular exosome, that acts as a sequester for cytosolic proteins to release them into the apoplast. This chain is Exocyst complex component EXO70E2, found in Arabidopsis thaliana (Mouse-ear cress).